Here is a 320-residue protein sequence, read N- to C-terminus: Beta-sarcoglycan (320 aa).

The span at Met-1–Ala-10 shows a compositional bias: low complexity. Positions Met-1–Val-34 are disordered. The Cytoplasmic portion of the chain corresponds to Met-1 to Ala-67. The segment covering Ser-23 to Val-34 has biased composition (basic and acidic residues). A helical; Signal-anchor for type II membrane protein transmembrane segment spans residues Ile-68–Ile-88. The Extracellular portion of the chain corresponds to Trp-89–His-320. 3 N-linked (GlcNAc...) asparagine glycosylation sites follow: Asn-160, Asn-213, and Asn-260. 2 cysteine pairs are disulfide-bonded: Cys-290–Cys-316 and Cys-292–Cys-309.

Belongs to the sarcoglycan beta/delta/gamma/zeta family. Cross-link to form 2 major subcomplexes: one consisting of SGCB, SGCD and SGCG and the other consisting of SGCB and SGCD. The association between SGCB and SGCG is particularly strong while SGCA is loosely associated with the other sarcoglycans. In terms of processing, disulfide bonds are present.

Its subcellular location is the cell membrane. It localises to the sarcolemma. The protein localises to the cytoplasm. It is found in the cytoskeleton. Its function is as follows. Component of the sarcoglycan complex, a subcomplex of the dystrophin-glycoprotein complex which forms a link between the F-actin cytoskeleton and the extracellular matrix. This is Beta-sarcoglycan (SGCB) from Mesocricetus auratus (Golden hamster).